A 464-amino-acid polypeptide reads, in one-letter code: UDP-N-acetylmuramate--L-alanine ligase (464 aa).

112-118 provides a ligand contact to ATP; that stretch reads GTHGKTT.

This sequence belongs to the MurCDEF family.

It localises to the cytoplasm. It catalyses the reaction UDP-N-acetyl-alpha-D-muramate + L-alanine + ATP = UDP-N-acetyl-alpha-D-muramoyl-L-alanine + ADP + phosphate + H(+). It participates in cell wall biogenesis; peptidoglycan biosynthesis. Functionally, cell wall formation. The protein is UDP-N-acetylmuramate--L-alanine ligase of Acidithiobacillus ferrooxidans (strain ATCC 23270 / DSM 14882 / CIP 104768 / NCIMB 8455) (Ferrobacillus ferrooxidans (strain ATCC 23270)).